Here is a 1021-residue protein sequence, read N- to C-terminus: Sodium/potassium-transporting ATPase subunit alpha-1 (1021 aa).

Residues 1 to 5 (MGKGV) constitute a propeptide that is removed on maturation. Residues 1-11 (MGKGVGRDKYE) are compositionally biased toward basic and acidic residues. Residues 1–36 (MGKGVGRDKYEPAAVSEHGDKKKAKKERDMDELKKE) form a disordered region. The Cytoplasmic portion of the chain corresponds to 6-85 (GRDKYEPAAV…NALTPPPTTP (80 aa)). Lys-9 is subject to N6-acetyllysine. A Phosphotyrosine modification is found at Tyr-10. Ser-16 carries the phosphoserine; by PKC modification. N6-acetyllysine is present on Lys-21. Basic and acidic residues predominate over residues 26–36 (KERDMDELKKE). Residues Ser-38 and Ser-45 each carry the phosphoserine modification. The phosphoinositide-3 kinase binding stretch occupies residues 80-82 (PPP). The chain crosses the membrane as a helical span at residues 86–106 (EWVKFCRQLFGGFSMLLWIGA). At 107-129 (VLCFLAYGIQAATEEEPQNDNLY) the chain is on the extracellular side. The helical transmembrane segment at 130–150 (LGVVLSAVVIITGCFSYYQEA) threads the bilayer. Residues 151–286 (KSSKIMESFK…GGQTPIAAEI (136 aa)) lie on the Cytoplasmic side of the membrane. Position 226 is a phosphoserine (Ser-226). Tyr-258 carries the post-translational modification Phosphotyrosine. The chain crosses the membrane as a helical span at residues 287-306 (EHFIHIITGVAVFLGVSFFI). The Extracellular portion of the chain corresponds to 307–318 (LSLILEYTWLEA). A helical transmembrane segment spans residues 319–336 (VIFLIGIIVANVPEGLLA). Topologically, residues 337–770 (TVTVCLTLTA…EEGRLIFDNL (434 aa)) are cytoplasmic. The 4-aspartylphosphate intermediate role is filled by Asp-374. Ser-450 and Ser-482 each carry phosphoserine. Residue Lys-485 coordinates ATP. Phosphotyrosine is present on Tyr-540. Residues 594–715 (RAAVPDAVGK…QGAIVAVTGD (122 aa)) are mediates interaction with SCN7A. Residue Ser-666 is modified to Phosphoserine. Mg(2+)-binding residues include Asp-715 and Asp-719. A helical transmembrane segment spans residues 771–790 (KKSIAYTLTSNIPEITPFLI). Topologically, residues 791-800 (FIIANIPLPL) are extracellular. A helical membrane pass occupies residues 801–821 (GTVTILCIDLGTDMVPAISLA). Topologically, residues 822–841 (YEQAESDIMKRQPRNPQTDK) are cytoplasmic. A helical transmembrane segment spans residues 842 to 864 (LVNERLISMAYGQIGMIQALGGF). At 865-916 (FTYFVIMAENGFLPNHLLGIRVTWDDRWINDVEDSYGQQWTYEQRKIVEFTC) the chain is on the extracellular side. A helical membrane pass occupies residues 917–936 (HTAFFVSIVVVQWADLVICK). Residues 937–949 (TRRNSVFQQGMKN) are Cytoplasmic-facing. A Phosphoserine; by PKA modification is found at Ser-941. The helical transmembrane segment at 950–968 (KILIFGLFEETALAAFLSY) threads the bilayer. The Extracellular segment spans residues 969–983 (CPGMGVALRMYPLKP). A helical transmembrane segment spans residues 984–1004 (TWWFCAFPYSLLIFVYDEVRK). At 1005-1021 (LIIRRRPGGWVEKETYY) the chain is on the cytoplasmic side.

It belongs to the cation transport ATPase (P-type) (TC 3.A.3) family. Type IIC subfamily. In terms of assembly, the sodium/potassium-transporting ATPase is composed of a catalytic alpha subunit, an auxiliary non-catalytic beta subunit and an additional regulatory subunit. Interacts with regulatory subunit FXYD1. Interacts with regulatory subunit FXYD3. Interacts with SIK1. Interacts with SLC35G1 and STIM1. Interacts with CLN3; this interaction regulates the sodium/potassium-transporting ATPase complex localization at the plasma membrane. Interacts with SCN7A; activates ATP1A1 P-type sodium:potassium-exchanging transporter activity which indirectly signals to nearby neurons to regulate sodium homeostasis. Phosphorylation on Tyr-10 modulates pumping activity. Phosphorylation of Ser-941 by PKA modulates the response of ATP1A1 to PKC. Dephosphorylation by protein phosphatase 2A (PP2A) following increases in intracellular sodium, leading to increase catalytic activity.

It is found in the cell membrane. The protein resides in the basolateral cell membrane. It localises to the sarcolemma. The protein localises to the cell projection. Its subcellular location is the axon. It is found in the melanosome. The enzyme catalyses K(+)(out) + Na(+)(in) + ATP + H2O = K(+)(in) + Na(+)(out) + ADP + phosphate + H(+). This is the catalytic component of the active enzyme, which catalyzes the hydrolysis of ATP coupled with the exchange of sodium and potassium ions across the plasma membrane. This action creates the electrochemical gradient of sodium and potassium ions, providing the energy for active transport of various nutrients. Could also be part of an osmosensory signaling pathway that senses body-fluid sodium levels and controls salt intake behavior as well as voluntary water intake to regulate sodium homeostasis. The protein is Sodium/potassium-transporting ATPase subunit alpha-1 (ATP1A1) of Bos taurus (Bovine).